The sequence spans 204 residues: MKETRSKQPDITPDMLLRAYSIGLFPMADSADDPELFWVEPEIRGIIPLDRFHVSRSLAKAIRRRPFDIRFDTAFAEVMEGCAQPAPDRPTTWINDTIRSLYAALHNMGHAHSVEAWEGDALVGGLYGVSLGAAFFGESMFSRRTGASKICLVHLVERLRSKGFQLLDTQFTTEHLKSFGAVDVPKAQYEVLLAKAIASPNLEF.

The protein belongs to the L/F-transferase family.

It is found in the cytoplasm. The catalysed reaction is N-terminal L-lysyl-[protein] + L-leucyl-tRNA(Leu) = N-terminal L-leucyl-L-lysyl-[protein] + tRNA(Leu) + H(+). It carries out the reaction N-terminal L-arginyl-[protein] + L-leucyl-tRNA(Leu) = N-terminal L-leucyl-L-arginyl-[protein] + tRNA(Leu) + H(+). It catalyses the reaction L-phenylalanyl-tRNA(Phe) + an N-terminal L-alpha-aminoacyl-[protein] = an N-terminal L-phenylalanyl-L-alpha-aminoacyl-[protein] + tRNA(Phe). Its function is as follows. Functions in the N-end rule pathway of protein degradation where it conjugates Leu, Phe and, less efficiently, Met from aminoacyl-tRNAs to the N-termini of proteins containing an N-terminal arginine or lysine. The sequence is that of Leucyl/phenylalanyl-tRNA--protein transferase from Rhizobium meliloti (strain 1021) (Ensifer meliloti).